The primary structure comprises 197 residues: Imidazoleglycerol-phosphate dehydratase (197 aa).

It belongs to the imidazoleglycerol-phosphate dehydratase family.

Its subcellular location is the cytoplasm. It carries out the reaction D-erythro-1-(imidazol-4-yl)glycerol 3-phosphate = 3-(imidazol-4-yl)-2-oxopropyl phosphate + H2O. Its pathway is amino-acid biosynthesis; L-histidine biosynthesis; L-histidine from 5-phospho-alpha-D-ribose 1-diphosphate: step 6/9. The protein is Imidazoleglycerol-phosphate dehydratase of Xanthobacter autotrophicus (strain ATCC BAA-1158 / Py2).